The sequence spans 3291 residues: Protocadherin-16 (3291 aa).

A signal peptide spans 1–35 (MQKELSVALSCPGMKSLRTLLPLLVLLGATVPGSW). Residues 36-2933 (GQAGSLDLQI…PDLNLLLVGA (2898 aa)) lie on the Extracellular side of the membrane. Cadherin domains are found at residues 37–137 (QAGS…APAF), 138–249 (PQAR…APAF), 250–356 (NQSR…QPSM), 369–466 (VSEA…APAF), 476–572 (LPEV…EPQF), 573–679 (QRTF…PPQF), 680–784 (YPRE…PPIF), 785–888 (EQLQ…SPAF), 889–994 (PAPE…APRF), 995–1105 (DSPT…EPTF), 1100–1205 (SEEP…SPTF), 1218–1317 (IQVP…SPDL), 1326–1429 (VPVV…APTF), 1430–1539 (ARDP…APVF), 1539–1642 (FASP…APAF), 1643–1744 (PQQE…TPTF), 1745–1848 (GNTH…APVF), 1849–1953 (PVPS…APAF), 1976–2061 (LATL…GPRF), 2062–2164 (PRTS…APRF), 2165–2270 (LRPH…RPTI), 2270–2369 (IPQP…VPTF), 2370–2475 (SQSL…APSF), 2476–2595 (TLPH…PPVF), 2596–2699 (TRAS…GPAF), 2700–2806 (PLSL…DPVF), and 2807–2926 (LAPS…APDL). A glycan (N-linked (GlcNAc...) asparagine) is linked at Asn-396. Asn-2354 carries an N-linked (GlcNAc...) asparagine glycan. Residues 2867–2886 (SRAPGSGTTTSGGGGRTRRE) form a disordered region. Residues 2934–2954 (VAASLGVVVVLALAALVLGLV) form a helical membrane-spanning segment. The Cytoplasmic portion of the chain corresponds to 2955–3291 (RARSRKAEAA…EPPDDTELRI (337 aa)). Positions 2978–3033 (SLQKLGREPPSPPPSEHLYHQTLPSYGGPGAGGPYPRGGSLDPSHSSGRGSAEAAE) are disordered. The segment covering 3004-3013 (GGPGAGGPYP) has biased composition (gly residues). Ser-3048 bears the Phosphoserine mark. 2 disordered regions span residues 3051-3081 (SSLA…APDT) and 3226-3291 (ASHR…ELRI). The span at 3237–3259 (SLSSAAMSPSFSPSLSPLAARSP) shows a compositional bias: low complexity. The span at 3270 to 3279 (PSASALSTES) shows a compositional bias: polar residues.

Heterophilic interaction with FAT4; this interaction affects their respective protein levels. As to expression, expressed in the epicardium and atrioventricular sulcus (at protein level).

The protein localises to the cell membrane. Functionally, calcium-dependent cell-adhesion protein. Mediates functions in neuroprogenitor cell proliferation and differentiation. In the heart, has a critical role for proper morphogenesis of the mitral valve, acting in the regulation of cell migration involved in valve formation. The chain is Protocadherin-16 (Dchs1) from Mus musculus (Mouse).